The following is a 118-amino-acid chain: Holin-like protein CidA 2 (118 aa).

4 helical membrane-spanning segments follow: residues 5 to 27 (MLLLQVGVLYVFSLVGTWIQGVF), 31 to 50 (MPGSLIGMLMLFLLLSTRIL), 62 to 84 (LLVFLPLFLIPSTTGLMEYESFL), and 88 to 110 (GSIIFLLVVISTVVTLIVSGYIS).

It belongs to the CidA/LrgA family. CidA subfamily.

Its subcellular location is the cell membrane. Its function is as follows. Increases the activity of extracellular murein hydrolases possibly by mediating their export via hole formation. Inhibited by the antiholin-like proteins LrgAB. In an unstressed cell, the LrgAB products probably inhibit the function of the CidA protein. When a cell is stressed by the addition of antibiotics or by other factors in the environment, CidA possibly oligomerizes within the bacterial cell membrane, creating lesions that disrupt the proton motive force, which in turn results in loss of cell viability. These lesions are also hypothesized to regulate the subsequent cell lysis by either allowing the murein hydrolases access to the cell wall substrate and/or regulating their activity by a possible change in the cell wall pH that results from loss of membrane potential. The protein is Holin-like protein CidA 2 (cidA2) of Bacillus anthracis.